A 461-amino-acid polypeptide reads, in one-letter code: Gustatory and pheromone receptor 32a (461 aa).

At 1–100 (MSPNTWVIEM…YSFFVRGVVH (100 aa)) the chain is on the cytoplasmic side. Residues 101-121 (ALTIFNVYSLFTPISAQLFFS) traverse the membrane as a helical segment. The Extracellular segment spans residues 122 to 127 (YRETDN). The chain crosses the membrane as a helical span at residues 128–148 (VNQWIELLLCILTYTLTVFVC). Residues 149 to 180 (AHNTTSMLRIMNEILQLDEEVRRQFGANLSQN) are Cytoplasmic-facing. The helical transmembrane segment at 181 to 201 (FGFLVKFLVGITACQAYIIVL) threads the bilayer. Residues 202–214 (KIYAVQGEITPTS) are Extracellular-facing. The helical transmembrane segment at 215 to 235 (YILLAFYGIQNGLTATYIVFA) threads the bilayer. The Cytoplasmic segment spans residues 236–317 (SALLRIVYIR…YKGINDCCNL (82 aa)). A helical transmembrane segment spans residues 318–338 (ILVSFLGYSFYTVTTNCYNLF). At 339–348 (VQITGKGMVS) the chain is on the extracellular side. A helical membrane pass occupies residues 349–369 (PNILQWCFAWLCLHVSLLALL). Residues 370–414 (SRSCGLTTTEANATSQILARVYAKSKEYQNIIDKFLTKSIKQEVQ) are Cytoplasmic-facing. A helical transmembrane segment spans residues 415–435 (FTAYGFFAIDNSTLFKIFSAV). Topologically, residues 436–461 (TTYLVILIQFKQLEDSKVEDPVPEQT) are extracellular.

It belongs to the insect chemoreceptor superfamily. Gustatory receptor (GR) family. Gr21a subfamily. Expressed in the adult labellar chemosensory neurons. Expressed in tarsal neurons for male-male courtship suppression. In larvae, is expressed in neurons of the terminal external chemosensory organ, and the dorsal and posterior external chemosensory organs.

It localises to the cell membrane. Gustatory receptor which mediates acceptance or avoidance behavior, depending on its substrates. Required for the response to N,N-Diethyl-meta-toluamide (DEET), the most widely used insect repellent worldwide. Functions as a pheromone receptor for a male inhibitory pheromone and promotes male-male aggression and suppresses male-male courtship. Also promotes preferentially virgin females courting over mated females. The sequence is that of Gustatory and pheromone receptor 32a (Gr32a) from Drosophila melanogaster (Fruit fly).